The following is a 250-amino-acid chain: uncharacterized protein (250 aa).

Residues 4-24 (FKYLLFLVVFAVFFLTFAFFD) traverse the membrane as a helical segment.

Its subcellular location is the membrane. This is an uncharacterized protein from Methanocaldococcus jannaschii (strain ATCC 43067 / DSM 2661 / JAL-1 / JCM 10045 / NBRC 100440) (Methanococcus jannaschii).